The sequence spans 912 residues: Probable transmembrane GTPase FZO-like, chloroplastic (912 aa).

Residues 1 to 54 (MRTLISHRQCVTSPFLISAASPPFPGRCFKLSSFTPPRHRRFSSLSIRNISHES) constitute a chloroplast transit peptide. The interval 51 to 71 (SHESADQTSSSRPRTLYPGGY) is disordered. At 55-773 (ADQTSSSRPR…SKRLEQDIRE (719 aa)) the chain is on the stromal side. GTP is bound by residues 359–364 (NSGKST) and Ser-521. The helical transmembrane segment at 774–794 (VFFVTVGGLGAAGLSASLLTS) threads the bilayer. Residues 795 to 801 (VLPTTLE) are Chloroplast intermembrane-facing. A helical membrane pass occupies residues 802–822 (DLLALGLCSAGGYVAIANFPY). Topologically, residues 823–912 (RRQAIIGKVN…LHVSRDEMRL (90 aa)) are stromal. Positions 877-904 (DRLLGIQKELSDIRSKLQLLQVDIDNLH) form a coiled coil.

Belongs to the TRAFAC class dynamin-like GTPase superfamily. Dynamin/Fzo/YdjA family. Mitofusin subfamily.

Its subcellular location is the plastid. It is found in the chloroplast inner membrane. The protein resides in the chloroplast thylakoid membrane. Functionally, probable membrane-remodeling GTPase that plays a unique role in the in the determination of thylakoid and chloroplast morphology and regulates organization of the thylakoid network. Not involved in the determination of mitochondrial morphology or ultrastructure. This Arabidopsis thaliana (Mouse-ear cress) protein is Probable transmembrane GTPase FZO-like, chloroplastic.